We begin with the raw amino-acid sequence, 60 residues long: L-amino-acid oxidase (60 aa).

An FAD-binding site is contributed by 1-4 (GPMR). Substrate is bound at residue Arg4.

The protein belongs to the flavin monoamine oxidase family. FIG1 subfamily. Homodimer; non-covalently linked. Requires FAD as cofactor. Contains 2 disulfide bonds. Post-translationally, N-glycosylated. In terms of tissue distribution, expressed by the venom gland.

Its subcellular location is the secreted. The enzyme catalyses an L-alpha-amino acid + O2 + H2O = a 2-oxocarboxylate + H2O2 + NH4(+). Functionally, catalyzes an oxidative deamination of predominantly hydrophobic and aromatic L-amino acids, thus producing hydrogen peroxide that may contribute to the diverse toxic effects of this enzyme. Exhibits diverse biological activities, such as hemorrhage, hemolysis, edema, apoptosis of vascular endothelial cells or tumor cell lines, antibacterial and antiparasitic activities, as well as regulation of platelet aggregation. Effects of snake L-amino oxidases on platelets are controversial, since they either induce aggregation or inhibit agonist-induced aggregation. These different effects are probably due to different experimental conditions. This is L-amino-acid oxidase from Bitis gabonica (Gaboon adder).